Here is a 514-residue protein sequence, read N- to C-terminus: Probable endopolygalacturonase D (514 aa).

The signal sequence occupies residues 1-16; it reads MKRCALLTPLLPLALA. The segment at 134–166 is disordered; sequence IKSSSPGPSSSFAAAATTEAPTSTRASPYTPYT. Residues 136 to 166 show a composition bias toward low complexity; the sequence is SSSPGPSSSFAAAATTEAPTSTRASPYTPYT. A disulfide bridge connects residues C173 and C188. An N-linked (GlcNAc...) asparagine glycan is attached at N240. PbH1 repeat units follow at residues 280–302, 303–341, 342–363, 364–384, 393–414, 422–444, and 456–500; these read VYNS…DIEN, TESL…DIKS, STDL…AITS, GTNI…SIGS, VDGV…RIKT, VSNI…VVQQ, and SNGV…SITG. The disordered stretch occupies residues 312–335; it reads TLDNSAGDEPNDSSDGDPAAHNSD. Residue N322 is glycosylated (N-linked (GlcNAc...) asparagine). The active-site Proton donor is the D356. C358 and C374 are joined by a disulfide. N366 is a glycosylation site (N-linked (GlcNAc...) asparagine). The active site involves H378. N-linked (GlcNAc...) asparagine glycosylation is present at N429. A disulfide bridge links C483 with C488. N-linked (GlcNAc...) asparagine glycosylation occurs at N490. Cysteines 506 and 513 form a disulfide.

Belongs to the glycosyl hydrolase 28 family.

It is found in the secreted. The catalysed reaction is (1,4-alpha-D-galacturonosyl)n+m + H2O = (1,4-alpha-D-galacturonosyl)n + (1,4-alpha-D-galacturonosyl)m.. In terms of biological role, involved in maceration and soft-rotting of plant tissue. Hydrolyzes the 1,4-alpha glycosidic bonds of de-esterified pectate in the smooth region of the plant cell wall. This chain is Probable endopolygalacturonase D (pgaD), found in Emericella nidulans (strain FGSC A4 / ATCC 38163 / CBS 112.46 / NRRL 194 / M139) (Aspergillus nidulans).